Reading from the N-terminus, the 122-residue chain is Histone H2B.2 (122 aa).

A compositionally biased stretch (low complexity) spans 1–10 (MAPKKAPAAT). The tract at residues 1–28 (MAPKKAPAATTEKKVKKAPTTEKKNKKK) is disordered. Alanine 2 is modified (n,N,N-trimethylalanine). Lysine 5 and lysine 42 each carry N6-acetyllysine. Lysine 116 participates in a covalent cross-link: Glycyl lysine isopeptide (Lys-Gly) (interchain with G-Cter in ubiquitin).

Belongs to the histone H2B family. The nucleosome is a histone octamer containing two molecules each of H2A, H2B, H3 and H4 assembled in one H3-H4 heterotetramer and two H2A-H2B heterodimers. The octamer wraps approximately 147 bp of DNA. Post-translationally, acetylation occurs almost exclusively in the MAC. Monoubiquitination to form H2BK115ub1 gives a specific tag for epigenetic transcriptional activation and is also prerequisite for H3K4me and H3K79me formation.

The protein localises to the nucleus. It is found in the chromosome. Core component of nucleosome. Nucleosomes wrap and compact DNA into chromatin, limiting DNA accessibility to the cellular machineries which require DNA as a template. Histones thereby play a central role in transcription regulation, DNA repair, DNA replication and chromosomal stability. DNA accessibility is regulated via a complex set of post-translational modifications of histones, also called histone code, and nucleosome remodeling. This chain is Histone H2B.2 (HTB2), found in Tetrahymena thermophila (strain SB210).